We begin with the raw amino-acid sequence, 244 residues long: Ribonuclease 3 (244 aa).

The 132-residue stretch at Leu5–Gly136 folds into the RNase III domain. A Mg(2+)-binding site is contributed by Glu49. Residue Asp53 is part of the active site. Residues Asp122 and Glu125 each coordinate Mg(2+). Glu125 is an active-site residue. Residues Asp161–Lys229 form the DRBM domain.

The protein belongs to the ribonuclease III family. As to quaternary structure, homodimer. Requires Mg(2+) as cofactor.

It localises to the cytoplasm. The enzyme catalyses Endonucleolytic cleavage to 5'-phosphomonoester.. Its function is as follows. Digests double-stranded RNA. Involved in the processing of primary rRNA transcript to yield the immediate precursors to the large and small rRNAs (23S and 16S). Processes some mRNAs, and tRNAs when they are encoded in the rRNA operon. Processes pre-crRNA and tracrRNA of type II CRISPR loci if present in the organism. This Chloroflexus aurantiacus (strain ATCC 29364 / DSM 637 / Y-400-fl) protein is Ribonuclease 3.